The following is a 218-amino-acid chain: Protein THO1 (218 aa).

One can recognise an SAP domain in the interval 4–38; the sequence is YSSLTVVQLKDLLTKRNLSVGGLKNELVQRLIKDD. At Ser22 the chain carries Phosphoserine. Disordered regions lie at residues 37 to 123 and 177 to 218; these read DDEE…LSPE and LVSR…GYRR. The span at 47–57 shows a compositional bias: polar residues; the sequence is VSPQEQNQEQG. Phosphoserine occurs at positions 58 and 68. The segment covering 72 to 96 has biased composition (basic and acidic residues); sequence TEKKEVSSEPKETNEPKEENKDVQK. Composition is skewed to low complexity over residues 102 to 122 and 186 to 203; these read SATASENEQAAASTAAPALSP and SGNNGKFKNRNKNANNRS. The span at 204 to 218 shows a compositional bias: basic residues; sequence RVSKNRRGNRSGYRR.

The protein belongs to the SAP domain-containing ribonucleoprotein family. Interacts with SUB2 in the presence of RNA; this interaction facilitates RNA binding of SUB2.

Facilitates RNA binding of SUB2 and likely plays a role in mRNA export. Suppressor of the transcriptional defect of HPR1 by overexpression. The protein is Protein THO1 (THO1) of Saccharomyces cerevisiae (strain ATCC 204508 / S288c) (Baker's yeast).